Reading from the N-terminus, the 213-residue chain is Thymidine kinase (213 aa).

ATP is bound by residues 20 to 27 and 93 to 96; these read GPMFSGKT and DEAQ. The Proton acceptor role is filled by Glu-94. Cys-150, Cys-153, Cys-185, and His-188 together coordinate Zn(2+).

The protein belongs to the thymidine kinase family. In terms of assembly, homotetramer.

It is found in the cytoplasm. It carries out the reaction thymidine + ATP = dTMP + ADP + H(+). The protein is Thymidine kinase of Mycoplasma genitalium (strain ATCC 33530 / DSM 19775 / NCTC 10195 / G37) (Mycoplasmoides genitalium).